The sequence spans 179 residues: Natural killer cells antigen CD94 (179 aa).

Over 1-10 (MAVSRITRWR) the chain is Cytoplasmic. Residues 11–31 (LMSMFFGIKCLFLIVALGVLV) form a helical; Signal-anchor for type II membrane protein membrane-spanning segment. The Extracellular portion of the chain corresponds to 32-179 (KNSFTIQNIQ…NRFICKQLPT (148 aa)). Cystine bridges form between Cys-58–Cys-70, Cys-61–Cys-72, Cys-89–Cys-174, and Cys-152–Cys-166. In terms of domain architecture, C-type lectin spans 68–175 (HQCSCYFISK…CENKNRFICK (108 aa)). Asn-93 is a glycosylation site (N-linked (GlcNAc...) asparagine).

As to quaternary structure, can form disulfide-bonded heterodimer with NKG2 family members KLRC1 and KLRC2. KLRD1-KLRC1 heterodimer interacts with peptide-bound MHC-E-B2M heterotrimeric complex. KLRD1 plays a prominent role in directly interacting with MHC-E. KLRD1-KLRC1 interacts with much higher affinity with peptide-bound MHC-E-B2M than KLRD1-KLRC2. Interacts with the adapter protein TYROBP/DAP12; this interaction is required for cell surface expression and cell activation.

Its subcellular location is the cell membrane. Functionally, immune receptor involved in self-nonself discrimination. In complex with KLRC1 or KLRC2 on cytotoxic and regulatory lymphocyte subsets, recognizes non-classical major histocompatibility (MHC) class Ib molecule MHC-E loaded with self-peptides derived from the signal sequence of classical MHC class Ia and non-classical MHC class Ib molecules. Enables cytotoxic cells to monitor the expression of MHC class I molecules in healthy cells and to tolerate self. Primarily functions as a ligand binding subunit as it lacks the capacity to signal. Its function is as follows. KLRD1-KLRC1 acts as an immune inhibitory receptor. Key inhibitory receptor on natural killer (NK) cells that regulates their activation and effector functions. Dominantly counteracts T cell receptor signaling on a subset of memory/effector CD8-positive T cells as part of an antigen-driven response to avoid autoimmunity. On intraepithelial CD8-positive gamma-delta regulatory T cells triggers TGFB1 secretion, which in turn limits the cytotoxic programming of intraepithelial CD8-positive alpha-beta T cells, distinguishing harmless from pathogenic antigens. In MHC-E-rich tumor microenvironment, acts as an immune inhibitory checkpoint and may contribute to progressive loss of effector functions of NK cells and tumor-specific T cells, a state known as cell exhaustion. Upon MHC-E-peptide binding, transmits intracellular signals through KLRC1 immunoreceptor tyrosine-based inhibition motifs (ITIMs) by recruiting INPP5D/SHIP-1 and INPPL1/SHIP-2 tyrosine phosphatases to ITIMs, and ultimately opposing signals transmitted by activating receptors through dephosphorylation of proximal signaling molecules. In terms of biological role, KLRD1-KLRC2 acts as an immune activating receptor. On cytotoxic lymphocyte subsets recognizes MHC-E loaded with signal sequence-derived peptides from non-classical MHC class Ib MHC-G molecules, likely playing a role in the generation and effector functions of adaptive NK cells and in maternal-fetal tolerance during pregnancy. Regulates the effector functions of terminally differentiated cytotoxic lymphocyte subsets, and in particular may play a role in adaptive NK cell response to viral infection. Upon MHC-E-peptide binding, transmits intracellular signals via the adapter protein TYROBP/DAP12, triggering the phosphorylation of proximal signaling molecules and cell activation. This Rattus norvegicus (Rat) protein is Natural killer cells antigen CD94 (Klrd1).